A 2763-amino-acid polypeptide reads, in one-letter code: Large tegument protein deneddylase (2763 aa).

The segment at 1–247 (MDIIPPIAVT…CDTYFTDEQY (247 aa)) is deubiquitination activity. A Peptidase C76 domain is found at 12–237 (AGVGSRNQFD…SSAVTLIYGS (226 aa)). Catalysis depends on residues Cys32, Asp168, and His170. The tract at residues 495 to 523 (LELFINLTILRLTGFVVENGTRTHHGATS) is interaction with inner tegument protein. The disordered stretch occupies residues 2456 to 2476 (VRPAQPAQPAQPAQPAQTVQP). 5 repeat units span residues 2458-2460 (PAQ), 2461-2463 (PAQ), 2464-2466 (PAQ), 2467-2469 (PAQ), and 2470-2472 (PAQ). The interval 2458-2472 (PAQPAQPAQPAQPAQ) is 5 X 3 AA repeats of P-A-Q. Residues 2459–2476 (AQPAQPAQPAQPAQTVQP) show a composition bias toward low complexity.

Belongs to the herpesviridae large tegument protein family. Interacts with host CUL1 and CUL4A; these interactions inhibit the E3 ligase activity of cullins. Interacts with inner tegument protein. Interacts with capsid vertex specific component CVC2. Interacts with the major capsid protein/MCP.

The protein localises to the virion tegument. It localises to the host cytoplasm. It is found in the host nucleus. The catalysed reaction is Thiol-dependent hydrolysis of ester, thioester, amide, peptide and isopeptide bonds formed by the C-terminal Gly of ubiquitin (a 76-residue protein attached to proteins as an intracellular targeting signal).. Large tegument protein that plays multiple roles in the viral cycle. During viral entry, remains associated with the capsid while most of the tegument is detached and participates in the capsid transport toward the host nucleus. Plays a role in the routing of the capsid at the nuclear pore complex and subsequent uncoating. Within the host nucleus, acts as a deneddylase and promotes the degradation of nuclear CRLs (cullin-RING ubiquitin ligases) and thereby stabilizes nuclear CRL substrates, while cytoplasmic CRLs remain unaffected. These modifications prevent host cell cycle S-phase progression and create a favorable environment allowing efficient viral genome replication. Participates later in the secondary envelopment of capsids. Indeed, plays a linker role for the association of the outer viral tegument to the capsids together with the inner tegument protein. This is Large tegument protein deneddylase from Homo sapiens (Human).